The sequence spans 742 residues: Collectin-12 (742 aa).

The Cytoplasmic segment spans residues 1 to 37; that stretch reads MKDDFAEEEEVQSFGYKRFGIQEGTQCTKCKNNWALK. Residues 38 to 58 form a helical; Signal-anchor for type II membrane protein membrane-spanning segment; sequence FSIVLLYILCALLTITVAILG. At 59–742 the chain is on the extracellular side; that stretch reads YKVVEKMDNV…EREAVPSSIL (684 aa). N-linked (GlcNAc...) asparagine glycosylation occurs at Asn67. A coiled-coil region spans residues 73 to 142; it reads ETSHQTYDNK…KDTLEKLQAN (70 aa). N-linked (GlcNAc...) asparagine glycans are attached at residues Asn159 and Asn168. A coiled-coil region spans residues 205–254; sequence NLNNLNLTQVQQRNLISNLQQSVDDTSLAIQRIKNDFQNLQQVFLQAKKD. The N-linked (GlcNAc...) asparagine glycan is linked to Asn271. Positions 439-608 are disordered; sequence TILQGPPGPR…TPASEVNGCP (170 aa). 2 consecutive Collagen-like domains span residues 452-511 and 527-586; these read GDRG…KGSR and GPPG…PGPS. The segment covering 501–514 has biased composition (low complexity); sequence SKGSQGPKGSRGSP. A compositionally biased stretch (pro residues) spans 516–532; sequence KPGPQGPSGDPGPPGPP. The segment covering 534 to 556 has biased composition (low complexity); the sequence is KDGLPGPQGPPGFQGLQGTVGEP. Pro residues predominate over residues 571–585; the sequence is PGMPGPKGPPGPPGP. 3 disulfides stabilise this stretch: Cys607–Cys618, Cys635–Cys730, and Cys708–Cys722. One can recognise a C-type lectin domain in the interval 614-731; it reads FTDKCYYFSL…CDEINNFICE (118 aa). Residues Phe644, Asn646, Glu650, Asp670, and Glu674 each coordinate Ca(2+). Lys691, Gln694, and Asp696 together coordinate a carbohydrate. Residues Gln694, Asp696, Asn697, Glu706, Asp707, Asn718, Asp719, and Glu731 each coordinate Ca(2+). Glu706 contacts a carbohydrate. 2 residues coordinate a carbohydrate: Asn718 and Asp719.

The extracellular domain forms a stable trimer. The extracellular domain interacts with fibrillar amyloid-beta peptide. As to expression, expressed in vascular endothelial cells in the heart, in perivascular macrophage and smooth muscle cells. Expressed in plaques-surrounding reactive astrocytes located in cerebral cortex and hippocampus and in leptomeningeal vessels showing characteristics of cerebral amyloid angiopathy (CAA) in a double transgenic mouse model of Alzheimer disease (at protein level). Strongly expressed in lung. Moderately expressed in heart, skeletal muscle, spleen, liver, brain, colon, testis, stomach and kidney. Expressed in neonatal astrocytes. Expressed in reactive astrocytes and vascular/perivascular cells in the brain of a double transgenic mouse model of Alzheimer disease.

It localises to the membrane. In terms of biological role, scavenger receptor that displays several functions associated with host defense. Promotes binding and phagocytosis of Gram-positive, Gram-negative bacteria and yeast. Also binds to sialyl Lewis X or a trisaccharide and asialo-orosomucoid (ASOR). Mediates the recognition, internalization and degradation of oxidatively modified low density lipoprotein (oxLDL) by vascular endothelial cells. Binds to several carbohydrates including Gal-type ligands, D-galactose, L- and D-fucose, GalNAc, T and Tn antigens in a calcium-dependent manner and internalizes specifically GalNAc in nurse-like cells. This is Collectin-12 (Colec12) from Mus musculus (Mouse).